Consider the following 248-residue polypeptide: MVDREQLVQKARLAEQAERYDDMAAAMKSVTELNEALSNEERNLLSVAYKNVVGARRSSWRVISSIEQKTSADGNEKKIEMVRAYREKIEKELEAVCQDVLNLLDNYLIKNCNETQHESKVFYLKMKGDYYRYLAEVATGEKRATVIESSEKAYNEAHEISKEHMQPTHPIRLGLALNYSVFYYEIQNAPEQACHLAKTAFDDAIAELDTLNEDSYQDSTLIMQLLRDNLTLWTSDQQDDEGGEGNKD.

Belongs to the 14-3-3 family. Homodimer, and heterodimer with other family members. Expressed in brain, gill, heart, intestine, kidney, liver, ovary, skeletal muscle, spleen and testis.

Its subcellular location is the cytoplasm. Functionally, adapter protein implicated in the regulation of a large spectrum of both general and specialized signaling pathways. Binds to a large number of partners, usually by recognition of a phosphoserine or phosphothreonine motif. Binding generally results in the modulation of the activity of the binding partner. This is 14-3-3 protein gamma-2 from Oncorhynchus mykiss (Rainbow trout).